We begin with the raw amino-acid sequence, 394 residues long: Phosphopentomutase (394 aa).

Positions 14, 287, 292, 328, 329, and 340 each coordinate Mn(2+).

It belongs to the phosphopentomutase family. It depends on Mn(2+) as a cofactor.

The protein localises to the cytoplasm. The catalysed reaction is 2-deoxy-alpha-D-ribose 1-phosphate = 2-deoxy-D-ribose 5-phosphate. The enzyme catalyses alpha-D-ribose 1-phosphate = D-ribose 5-phosphate. It functions in the pathway carbohydrate degradation; 2-deoxy-D-ribose 1-phosphate degradation; D-glyceraldehyde 3-phosphate and acetaldehyde from 2-deoxy-alpha-D-ribose 1-phosphate: step 1/2. Its function is as follows. Isomerase that catalyzes the conversion of deoxy-ribose 1-phosphate (dRib-1-P) and ribose 1-phosphate (Rib-1-P) to deoxy-ribose 5-phosphate (dRib-5-P) and ribose 5-phosphate (Rib-5-P), respectively. This is Phosphopentomutase from Listeria innocua serovar 6a (strain ATCC BAA-680 / CLIP 11262).